The following is a 335-amino-acid chain: Galactinol synthase 2 (335 aa).

Lys103 is an active-site residue. Mn(2+) is bound by residues Asp119, Asp121, and His257.

Belongs to the glycosyltransferase 8 family. Galactosyltransferase subfamily. It depends on a divalent metal cation as a cofactor. As to expression, accumulates in mature seeds.

The protein localises to the cytoplasm. It carries out the reaction myo-inositol + UDP-alpha-D-galactose = alpha-D-galactosyl-(1-&gt;3)-1D-myo-inositol + UDP + H(+). In terms of biological role, galactinol synthase involved in the biosynthesis of raffinose family oligosaccharides (RFOs) that function as osmoprotectants. Promotes stress tolerance of factors such as drought, chilling, salinity and methylviologen (MV), a superoxide radical generating drug, by mediating an increase in levels of the endogenous osmoprotective compounds, galactinol and raffinose. The sequence is that of Galactinol synthase 2 (GOLS2) from Arabidopsis thaliana (Mouse-ear cress).